The chain runs to 623 residues: Sphingomyelinase C 2 (623 aa).

The first 25 residues, 1 to 25 (MINKITKPKLLIGYYLLLFSLIRCL), serve as a signal peptide directing secretion. 2 stretches are compositionally biased toward low complexity: residues 51 to 61 (VNSVSINNDPA) and 67 to 80 (NPAS…NAVP). Positions 51 to 121 (VNSVSINNDP…DPNPANLASA (71 aa)) are disordered. Polar residues predominate over residues 89-102 (NPVNPASANSNQVN). A compositionally biased stretch (low complexity) spans 110–121 (PADPNPANLASA).

Its subcellular location is the secreted. The catalysed reaction is a sphingomyelin + H2O = phosphocholine + an N-acylsphing-4-enine + H(+). The chain is Sphingomyelinase C 2 (sph2) from Leptospira interrogans serogroup Icterohaemorrhagiae serovar Lai (strain 56601).